Consider the following 340-residue polypeptide: Deubiquitinase SseL (340 aa).

The active site involves His223. Cys285 functions as the Nucleophile in the catalytic mechanism.

Belongs to the peptidase C79 family.

The protein resides in the secreted. It localises to the host cytoplasm. Effector proteins function to alter host cell physiology and promote bacterial survival in host tissues. This protease targets the host cell ubiquitin pathway by acting as a deubiquitinase in infected host cells. The chain is Deubiquitinase SseL (sseL) from Salmonella paratyphi B (strain ATCC BAA-1250 / SPB7).